The sequence spans 245 residues: 1-(5-phosphoribosyl)-5-[(5-phosphoribosylamino)methylideneamino] imidazole-4-carboxamide isomerase (245 aa).

Residue aspartate 7 is the Proton acceptor of the active site. Aspartate 129 (proton donor) is an active-site residue.

This sequence belongs to the HisA/HisF family.

It is found in the cytoplasm. The catalysed reaction is 1-(5-phospho-beta-D-ribosyl)-5-[(5-phospho-beta-D-ribosylamino)methylideneamino]imidazole-4-carboxamide = 5-[(5-phospho-1-deoxy-D-ribulos-1-ylimino)methylamino]-1-(5-phospho-beta-D-ribosyl)imidazole-4-carboxamide. Its pathway is amino-acid biosynthesis; L-histidine biosynthesis; L-histidine from 5-phospho-alpha-D-ribose 1-diphosphate: step 4/9. The sequence is that of 1-(5-phosphoribosyl)-5-[(5-phosphoribosylamino)methylideneamino] imidazole-4-carboxamide isomerase from Psychromonas ingrahamii (strain DSM 17664 / CCUG 51855 / 37).